Consider the following 661-residue polypeptide: 72 kDa type IV collagenase (661 aa).

Positions 1 to 30 (MTEARVSRGALAALLRALCALGCLLGRAAA) are cleaved as a signal peptide. The propeptide at 31 to 110 (APSPIIKFPG…PRCGNPDVAN (80 aa)) is activation peptide. The short motif at 101–108 (PRCGNPDV) is the Cysteine switch element. Zn(2+) is bound at residue C103. Residues 111-222 (YNFFPRKPKW…LRTLGEGQVV (112 aa)) are collagenase-like 1. Ca(2+)-binding residues include D135 and D169. H179 and D181 together coordinate Zn(2+). D186 and G187 together coordinate Ca(2+). Residue H194 coordinates Zn(2+). Ca(2+) contacts are provided by G201, G203, and D205. Zn(2+) is bound at residue H207. Residues D209, D210, and E212 each coordinate Ca(2+). Positions 223 to 397 (RVKYGNADGE…WGFCPDQGYS (175 aa)) are collagen-binding. Fibronectin type-II domains are found at residues 229-277 (ADGE…FCPH), 287-335 (ADGQ…FCPE), and 345-393 (SEGA…FCPD). 6 disulfides stabilise this stretch: C234–C260, C248–C275, C292–C318, C306–C333, C350–C376, and C364–C391. The interval 398–466 (LFLVAAHEFG…GPTPTLGPVT (69 aa)) is collagenase-like 2. H404 contributes to the Zn(2+) binding site. The active site involves E405. 2 residues coordinate Zn(2+): H408 and H414. The interval 415–661 (SQDPGALMAP…GSIKSDWLGC (247 aa)) is required for inhibitor TIMP2 binding. 4 Hemopexin repeats span residues 469-517 (LCKQ…WPEL), 518-564 (PEKI…GLPP), 566-614 (VQKV…WNAI), and 615-661 (PDNL…WLGC). Cysteines 470 and 661 form a disulfide. The Ca(2+) site is built by D477, D522, and D570. N-linked (GlcNAc...) asparagine glycosylation is present at N574. D619 is a Ca(2+) binding site. The N-linked (GlcNAc...) asparagine glycan is linked to N643.

The protein belongs to the peptidase M10A family. In terms of assembly, interacts (via the C-terminal hemopexin-like domains-containing region) with the integrin alpha-V/beta-3; the interaction promotes vascular invasion in angiogenic vessels and melamoma cells. Interacts (via the C-terminal PEX domain) with TIMP2 (via the C-terminal); the interaction inhibits the degradation activity. Interacts with GSK3B. It depends on Ca(2+) as a cofactor. Requires Zn(2+) as cofactor. Phosphorylation on multiple sites modulates enzymatic activity. Phosphorylated by PKC in vitro. Post-translationally, the propeptide is processed by MMP14 (MT-MMP1) and MMP16 (MT-MMP3). Autocatalytic cleavage in the C-terminal produces the anti-angiogenic peptide, PEX. This processing appears to be facilitated by binding integrinv/beta3.

The protein resides in the secreted. The protein localises to the extracellular space. It is found in the extracellular matrix. It localises to the membrane. Its subcellular location is the nucleus. It carries out the reaction Cleavage of gelatin type I and collagen types IV, V, VII, X. Cleaves the collagen-like sequence Pro-Gln-Gly-|-Ile-Ala-Gly-Gln.. In terms of biological role, ubiquitinous metalloproteinase that is involved in diverse functions such as remodeling of the vasculature, angiogenesis, tissue repair, tumor invasion, inflammation, and atherosclerotic plaque rupture. As well as degrading extracellular matrix proteins, can also act on several nonmatrix proteins such as big endothelial 1 and beta-type CGRP promoting vasoconstriction. Also cleaves KISS at a Gly-|-Leu bond. Appears to have a role in myocardial cell death pathways. Contributes to myocardial oxidative stress by regulating the activity of GSK3beta. Cleaves GSK3beta in vitro. Involved in the formation of the fibrovascular tissues. PEX, the C-terminal non-catalytic fragment of MMP2, possesses anti-angiogenic and anti-tumor properties and inhibits cell migration and cell adhesion to FGF2 and vitronectin. Ligand for integrin alpha-v/beta-3 on the surface of blood vessels. This is 72 kDa type IV collagenase (MMP2) from Bos taurus (Bovine).